A 316-amino-acid polypeptide reads, in one-letter code: Adenine deaminase (316 aa).

Residues histidine 14, histidine 16, and histidine 194 each contribute to the Zn(2+) site. The Proton donor role is filled by glutamate 197. Aspartate 275 provides a ligand contact to Zn(2+). Aspartate 276 provides a ligand contact to substrate.

It belongs to the metallo-dependent hydrolases superfamily. Adenosine and AMP deaminases family. Adenine deaminase type 2 subfamily. Zn(2+) is required as a cofactor.

The catalysed reaction is adenine + H2O + H(+) = hypoxanthine + NH4(+). Functionally, catalyzes the hydrolytic deamination of adenine to hypoxanthine. Plays an important role in the purine salvage pathway and in nitrogen catabolism. This chain is Adenine deaminase, found in Bordetella avium (strain 197N).